The following is a 215-amino-acid chain: Probable transaldolase 1 (215 aa).

Residue lysine 83 is the Schiff-base intermediate with substrate of the active site.

It belongs to the transaldolase family. Type 3B subfamily.

It localises to the cytoplasm. The enzyme catalyses D-sedoheptulose 7-phosphate + D-glyceraldehyde 3-phosphate = D-erythrose 4-phosphate + beta-D-fructose 6-phosphate. The protein operates within carbohydrate degradation; pentose phosphate pathway; D-glyceraldehyde 3-phosphate and beta-D-fructose 6-phosphate from D-ribose 5-phosphate and D-xylulose 5-phosphate (non-oxidative stage): step 2/3. Transaldolase is important for the balance of metabolites in the pentose-phosphate pathway. The sequence is that of Probable transaldolase 1 from Bacillus anthracis.